The chain runs to 427 residues: Phosphomethylpyrimidine synthase (427 aa).

Substrate is bound by residues N66, M95, Y124, H163, 185-187 (SRG), 226-229 (DGLR), and E265. H269 is a Zn(2+) binding site. Residue Y292 participates in substrate binding. H333 serves as a coordination point for Zn(2+). Residues C409, C412, and C416 each coordinate [4Fe-4S] cluster.

The protein belongs to the ThiC family. In terms of assembly, homodimer. The cofactor is [4Fe-4S] cluster.

The enzyme catalyses 5-amino-1-(5-phospho-beta-D-ribosyl)imidazole + S-adenosyl-L-methionine = 4-amino-2-methyl-5-(phosphooxymethyl)pyrimidine + CO + 5'-deoxyadenosine + formate + L-methionine + 3 H(+). The protein operates within cofactor biosynthesis; thiamine diphosphate biosynthesis. Its function is as follows. Catalyzes the synthesis of the hydroxymethylpyrimidine phosphate (HMP-P) moiety of thiamine from aminoimidazole ribotide (AIR) in a radical S-adenosyl-L-methionine (SAM)-dependent reaction. This is Phosphomethylpyrimidine synthase from Syntrophus aciditrophicus (strain SB).